Consider the following 396-residue polypeptide: uncharacterized protein (396 aa).

This sequence belongs to the mycobacterial PPE family.

This is an uncharacterized protein from Mycobacterium tuberculosis (strain CDC 1551 / Oshkosh).